A 36-amino-acid chain; its full sequence is Photosystem I reaction center subunit VIII (36 aa).

A helical membrane pass occupies residues 9 to 29 (IFVPLVGLVFPAIAMASLSLY).

Belongs to the PsaI family.

Its subcellular location is the plastid. The protein localises to the chloroplast thylakoid membrane. In terms of biological role, may help in the organization of the PsaL subunit. The protein is Photosystem I reaction center subunit VIII of Phalaenopsis aphrodite subsp. formosana (Moth orchid).